A 211-amino-acid polypeptide reads, in one-letter code: Metalloproteinase inhibitor 3 (211 aa).

The first 23 residues, 1 to 23, serve as a signal peptide directing secretion; that stretch reads MTPWLGLVVLLGSWSLGDWGAEA. A Zn(2+)-binding site is contributed by Cys24. Involved in metalloproteinase-binding regions lie at residues 24–27 and 88–89; these read CTCS and ES. Cystine bridges form between Cys24-Cys91, Cys26-Cys118, Cys36-Cys143, Cys145-Cys192, Cys150-Cys155, and Cys163-Cys184. The 120-residue stretch at 24–143 folds into the NTR domain; that stretch reads CTCSPSHPQD…GLNYRYHLGC (120 aa). Positions 105–188 are mediates interaction with EFEMP1; that stretch reads TGRVYDGKMY…SKHYACIRQK (84 aa). The N-linked (GlcNAc...) asparagine glycan is linked to Asn207.

This sequence belongs to the protease inhibitor I35 (TIMP) family. In terms of assembly, interacts with EFEMP1. Interacts with KDR.

It is found in the secreted. The protein resides in the extracellular space. It localises to the extracellular matrix. Mediates a variety of processes including matrix regulation and turnover, inflammation, and angiogenesis, through reversible inhibition of zinc protease superfamily enzymes, primarily matrix metalloproteinases (MMPs). Regulates extracellular matrix (ECM) remodeling through inhibition of matrix metalloproteinases (MMP) including MMP-1, MMP-2, MMP-3, MMP-7, MMP-9, MMP-13, MMP-14 and MMP-15. Additionally, modulates the processing of amyloid precursor protein (APP) and apolipoprotein E receptor ApoER2 by inhibiting two alpha-secretases ADAM10 and ADAM17. Functions as a tumor suppressor and a potent inhibitor of angiogenesis. Exerts its anti-angiogenic effect by directly interacting with vascular endothelial growth factor (VEGF) receptor-2/KDR, preventing its binding to the VEGFA ligand. Selectively induces apoptosis in angiogenic endothelial cells through a caspase-independent cell death pathway. Mechanistically, inhibits matrix-induced focal adhesion kinase PTK2 tyrosine phosphorylation and association with paxillin/PXN and disrupts the incorporation of ITGB3, PTK2 and PXN into focal adhesion contacts on the matrix. The sequence is that of Metalloproteinase inhibitor 3 (TIMP3) from Equus caballus (Horse).